The following is an 86-amino-acid chain: Anti-adapter protein IraP (86 aa).

A coiled-coil region spans residues 1 to 36 (MKNLIAELLFKLAQKEEESKELCAQVEALEIIVTAM).

It belongs to the IraP family. In terms of assembly, interacts with RssB.

It is found in the cytoplasm. Its function is as follows. Inhibits RpoS proteolysis by regulating RssB activity, thereby increasing the stability of the sigma stress factor RpoS especially during phosphate starvation, but also in stationary phase and during nitrogen starvation. Its effect on RpoS stability is due to its interaction with RssB, which probably blocks the interaction of RssB with RpoS, and the consequent delivery of the RssB-RpoS complex to the ClpXP protein degradation pathway. In Shigella flexneri serotype 5b (strain 8401), this protein is Anti-adapter protein IraP.